The following is a 57-amino-acid chain: uncharacterized protein (57 aa).

This is an uncharacterized protein from Escherichia coli (strain K12).